The primary structure comprises 331 residues: MEFYASLKSIAMHVPSERVKNAEFQQFLDTSDEWIEKRTGIKERRFANDEEKSSDLGVIAAKQAIERAHLTPQDIDLVVVATLSPDFLAMPSTACVLSAKLGIENKPAFDISAACTGFIYLLSVAKAYVESGMYENVLIVGAEKTSSVLDFKDRGTCILFGDGAGACVIGRTKRLKESVLDVQISANGNFSNYLYTPRTLKPTPFNAKEEALEPFLRMKGNEVFKLAVKTLLKDVETILEKNALKPEDVRLFIPHQANFRIIQAVREHLDFKDEQVVLTVHKYGNTSAASIPMAMCEAYEEGRLKKGDLMLLDAFGGGLTWGSALVYFGGI.

Residues C115 and H255 contribute to the active site. The segment at 256–260 is ACP-binding; the sequence is QANFR. N285 is a catalytic residue.

It belongs to the thiolase-like superfamily. FabH family. As to quaternary structure, homodimer.

Its subcellular location is the cytoplasm. The enzyme catalyses malonyl-[ACP] + acetyl-CoA + H(+) = 3-oxobutanoyl-[ACP] + CO2 + CoA. It functions in the pathway lipid metabolism; fatty acid biosynthesis. Catalyzes the condensation reaction of fatty acid synthesis by the addition to an acyl acceptor of two carbons from malonyl-ACP. Catalyzes the first condensation reaction which initiates fatty acid synthesis and may therefore play a role in governing the total rate of fatty acid production. Possesses both acetoacetyl-ACP synthase and acetyl transacylase activities. Its substrate specificity determines the biosynthesis of branched-chain and/or straight-chain of fatty acids. This is Beta-ketoacyl-[acyl-carrier-protein] synthase III from Helicobacter pylori (strain J99 / ATCC 700824) (Campylobacter pylori J99).